A 446-amino-acid polypeptide reads, in one-letter code: D-inositol 3-phosphate glycosyltransferase (446 aa).

The interval 1-21 is disordered; sequence MSHYVGRLGRRSPAGSGRLRL. His-34 is a binding site for 1D-myo-inositol 3-phosphate. UDP-N-acetyl-alpha-D-glucosamine is bound by residues 40–41 and Gly-48; that span reads QP. Residues 45–50, Lys-103, Tyr-136, Thr-160, and Arg-180 each bind 1D-myo-inositol 3-phosphate; that span reads DAGGMN. Residues Arg-255, Lys-260, and Val-321 each coordinate UDP-N-acetyl-alpha-D-glucosamine. The Mg(2+) site is built by Phe-330, Arg-331, and Ala-333. Glu-343 and Glu-351 together coordinate UDP-N-acetyl-alpha-D-glucosamine. Residue Thr-357 coordinates Mg(2+).

It belongs to the glycosyltransferase group 1 family. MshA subfamily. Homodimer.

It carries out the reaction 1D-myo-inositol 3-phosphate + UDP-N-acetyl-alpha-D-glucosamine = 1D-myo-inositol 2-acetamido-2-deoxy-alpha-D-glucopyranoside 3-phosphate + UDP + H(+). In terms of biological role, catalyzes the transfer of a N-acetyl-glucosamine moiety to 1D-myo-inositol 3-phosphate to produce 1D-myo-inositol 2-acetamido-2-deoxy-glucopyranoside 3-phosphate in the mycothiol biosynthesis pathway. This chain is D-inositol 3-phosphate glycosyltransferase, found in Streptomyces scabiei (strain 87.22).